The sequence spans 316 residues: Transaldolase (316 aa).

The active-site Schiff-base intermediate with substrate is the Lys132.

It belongs to the transaldolase family. Type 1 subfamily. As to quaternary structure, homodimer.

It localises to the cytoplasm. It carries out the reaction D-sedoheptulose 7-phosphate + D-glyceraldehyde 3-phosphate = D-erythrose 4-phosphate + beta-D-fructose 6-phosphate. Its pathway is carbohydrate degradation; pentose phosphate pathway; D-glyceraldehyde 3-phosphate and beta-D-fructose 6-phosphate from D-ribose 5-phosphate and D-xylulose 5-phosphate (non-oxidative stage): step 2/3. Its function is as follows. Transaldolase is important for the balance of metabolites in the pentose-phosphate pathway. This chain is Transaldolase, found in Aliivibrio salmonicida (strain LFI1238) (Vibrio salmonicida (strain LFI1238)).